The following is a 199-amino-acid chain: Large ribosomal subunit protein uL13A (199 aa).

Position 2 is an N-acetylserine (serine 2). Lysine 177 participates in a covalent cross-link: Glycyl lysine isopeptide (Lys-Gly) (interchain with G-Cter in ubiquitin).

The protein belongs to the universal ribosomal protein uL13 family. As to quaternary structure, component of the large ribosomal subunit (LSU). Mature yeast ribosomes consist of a small (40S) and a large (60S) subunit. The 40S small subunit contains 1 molecule of ribosomal RNA (18S rRNA) and 33 different proteins (encoded by 57 genes). The large 60S subunit contains 3 rRNA molecules (25S, 5.8S and 5S rRNA) and 46 different proteins (encoded by 81 genes). In terms of processing, N-terminally acetylated by acetyltransferase NatA.

The protein resides in the cytoplasm. Component of the ribosome, a large ribonucleoprotein complex responsible for the synthesis of proteins in the cell. The small ribosomal subunit (SSU) binds messenger RNAs (mRNAs) and translates the encoded message by selecting cognate aminoacyl-transfer RNA (tRNA) molecules. The large subunit (LSU) contains the ribosomal catalytic site termed the peptidyl transferase center (PTC), which catalyzes the formation of peptide bonds, thereby polymerizing the amino acids delivered by tRNAs into a polypeptide chain. The nascent polypeptides leave the ribosome through a tunnel in the LSU and interact with protein factors that function in enzymatic processing, targeting, and the membrane insertion of nascent chains at the exit of the ribosomal tunnel. This is Large ribosomal subunit protein uL13A from Saccharomyces cerevisiae (strain ATCC 204508 / S288c) (Baker's yeast).